A 487-amino-acid chain; its full sequence is Probable glycine dehydrogenase (decarboxylating) subunit 2 (487 aa).

An N6-(pyridoxal phosphate)lysine modification is found at lysine 273.

The protein belongs to the GcvP family. C-terminal subunit subfamily. The glycine cleavage system is composed of four proteins: P, T, L and H. In this organism, the P 'protein' is a heterodimer of two subunits. The cofactor is pyridoxal 5'-phosphate.

The catalysed reaction is N(6)-[(R)-lipoyl]-L-lysyl-[glycine-cleavage complex H protein] + glycine + H(+) = N(6)-[(R)-S(8)-aminomethyldihydrolipoyl]-L-lysyl-[glycine-cleavage complex H protein] + CO2. The glycine cleavage system catalyzes the degradation of glycine. The P protein binds the alpha-amino group of glycine through its pyridoxal phosphate cofactor; CO(2) is released and the remaining methylamine moiety is then transferred to the lipoamide cofactor of the H protein. In Lysinibacillus sphaericus (strain C3-41), this protein is Probable glycine dehydrogenase (decarboxylating) subunit 2.